Reading from the N-terminus, the 493-residue chain is UDP-glucose 6-dehydrogenase (493 aa).

NAD(+)-binding positions include 11–16 (GAGYVG), Asp-36, Arg-41, and 89–93 (VNTPT). A disordered region spans residues 88–110 (SVNTPTKTYGMGKGRAADLKYIE). The residue at position 107 (Lys-107) is an N6-acetyllysine. The allosteric switch region stretch occupies residues 129-135 (KSTVPVR). 130-132 (STV) lines the NAD(+) pocket. The active-site Proton donor/acceptor is Glu-161. Substrate contacts are provided by residues 161–165 (EFLAE), 220–224 (KLAAN), Arg-260, and 267–273 (KASVGFG). Residue Glu-165 participates in NAD(+) binding. Catalysis depends on Lys-220, which acts as the Proton donor/acceptor. Residue Cys-276 is the Nucleophile of the active site. Residue 276 to 279 (CFQK) coordinates NAD(+). The important for formation of active hexamer structure stretch occupies residues 321–325 (SLFNT). 338-339 (FK) is a binding site for substrate. Arg-346 contacts NAD(+). Arg-442 contacts substrate. The tract at residues 466 to 493 (VSSKRIPYTPGEIPKFSLQDPPNKKPKV) is disordered. Thr-474 bears the Phosphothreonine mark.

This sequence belongs to the UDP-glucose/GDP-mannose dehydrogenase family. Homohexamer.

The catalysed reaction is UDP-alpha-D-glucose + 2 NAD(+) + H2O = UDP-alpha-D-glucuronate + 2 NADH + 3 H(+). It participates in nucleotide-sugar biosynthesis; UDP-alpha-D-glucuronate biosynthesis; UDP-alpha-D-glucuronate from UDP-alpha-D-glucose: step 1/1. UDP-alpha-D-xylose (UDX) acts as a feedback inhibitor. It binds at the same site as the substrate, but functions as allosteric inhibitor by triggering a conformation change that disrupts the active hexameric ring structure and gives rise to an inactive, horseshoe-shaped hexamer. Functionally, catalyzes the formation of UDP-alpha-D-glucuronate, a constituent of complex glycosaminoglycans. Required for the biosynthesis of chondroitin sulfate and heparan sulfate. Required for embryonic development via its role in the biosynthesis of glycosaminoglycans. Required for proper brain and neuronal development. This chain is UDP-glucose 6-dehydrogenase (Ugdh), found in Rattus norvegicus (Rat).